The sequence spans 416 residues: MAGDFSNRAPWKRSACDRCRAQKLRCHRDSGHSTDACLRCLKSGIECVTSKARPTGRPPSRQVQPTVSVEQGDTSSSSHTTDSSPSAGGTDINSMMNFEYDLSLDNILDSIGMQHSDFIVNDNILVDISPLSSQSTSQHSVAQAQTVDPSTIQSTTSYQFNSLPSTSSMDSALPIRSDHVELLLSRLHSKLSAQLYSIRSSPWDVKGTLNLSLAHQGIGQDFENCESHPLVQVSQACTELEKLLSGLRAPASAEHTPSSFSYTPAVPPRLRTTQLLIALSCYIQIVSIYGIIFSKVFDYLLSTSKTSIGSYQSSPLTLYIGGLPIPPNETLSGNLLVHLIEHQLHQIEQLMGLPEHYRVSSRAKDTKDGELGLFGSQHSQSLLNAAIQLGEDRDGNHDDIRCVRALKVVMRQIKDF.

A DNA-binding region (zn(2)-C6 fungal-type) is located at residues 16–47 (CDRCRAQKLRCHRDSGHSTDACLRCLKSGIEC). The tract at residues 50-92 (SKARPTGRPPSRQVQPTVSVEQGDTSSSSHTTDSSPSAGGTDI) is disordered. The segment covering 61-73 (RQVQPTVSVEQGD) has biased composition (polar residues). Positions 74 to 86 (TSSSSHTTDSSPS) are enriched in low complexity.

It is found in the nucleus. Transcription factor that regulates the expression of the gene cluster that mediates the biosynthesis of fusaric acid, a mycotoxin with low to moderate toxicity to animals and humans, but with high phytotoxic properties. In Fusarium oxysporum f. sp. lycopersici (strain 4287 / CBS 123668 / FGSC 9935 / NRRL 34936) (Fusarium vascular wilt of tomato), this protein is Fusaric acid cluster transcription factor FUB10.